The primary structure comprises 657 residues: Heat shock protein hsp-6 (657 aa).

Residues 1 to 27 constitute a mitochondrion transit peptide; it reads MLSARSFLSSARTIARSSLMSARSLSD. Residues 637–657 are disordered; it reads KNSGGDAQEAKTAEEPKKEQN. Basic and acidic residues predominate over residues 644 to 657; it reads QEAKTAEEPKKEQN.

It belongs to the heat shock protein 70 family.

It is found in the mitochondrion. The chain is Heat shock protein hsp-6 from Caenorhabditis elegans.